The sequence spans 375 residues: Acetylornithine aminotransferase (375 aa).

Residues 93–94 and Phe-120 each bind pyridoxal 5'-phosphate; that span reads GT. Arg-123 provides a ligand contact to N(2)-acetyl-L-ornithine. 205-208 serves as a coordination point for pyridoxal 5'-phosphate; that stretch reads DEVQ. At Lys-234 the chain carries N6-(pyridoxal phosphate)lysine. A N(2)-acetyl-L-ornithine-binding site is contributed by Thr-262. Thr-263 provides a ligand contact to pyridoxal 5'-phosphate.

The protein belongs to the class-III pyridoxal-phosphate-dependent aminotransferase family. ArgD subfamily. In terms of assembly, homodimer. It depends on pyridoxal 5'-phosphate as a cofactor.

The protein resides in the cytoplasm. The catalysed reaction is N(2)-acetyl-L-ornithine + 2-oxoglutarate = N-acetyl-L-glutamate 5-semialdehyde + L-glutamate. It participates in amino-acid biosynthesis; L-arginine biosynthesis; N(2)-acetyl-L-ornithine from L-glutamate: step 4/4. The chain is Acetylornithine aminotransferase from Staphylococcus epidermidis (strain ATCC 35984 / DSM 28319 / BCRC 17069 / CCUG 31568 / BM 3577 / RP62A).